Reading from the N-terminus, the 224-residue chain is Phosphoribosylformylglycinamidine synthase subunit PurQ (224 aa).

The region spanning M1–A224 is the Glutamine amidotransferase type-1 domain. C84 functions as the Nucleophile in the catalytic mechanism. Active-site residues include H196 and E198.

In terms of assembly, part of the FGAM synthase complex composed of 1 PurL, 1 PurQ and 2 PurS subunits.

It is found in the cytoplasm. The enzyme catalyses N(2)-formyl-N(1)-(5-phospho-beta-D-ribosyl)glycinamide + L-glutamine + ATP + H2O = 2-formamido-N(1)-(5-O-phospho-beta-D-ribosyl)acetamidine + L-glutamate + ADP + phosphate + H(+). It carries out the reaction L-glutamine + H2O = L-glutamate + NH4(+). The protein operates within purine metabolism; IMP biosynthesis via de novo pathway; 5-amino-1-(5-phospho-D-ribosyl)imidazole from N(2)-formyl-N(1)-(5-phospho-D-ribosyl)glycinamide: step 1/2. In terms of biological role, part of the phosphoribosylformylglycinamidine synthase complex involved in the purines biosynthetic pathway. Catalyzes the ATP-dependent conversion of formylglycinamide ribonucleotide (FGAR) and glutamine to yield formylglycinamidine ribonucleotide (FGAM) and glutamate. The FGAM synthase complex is composed of three subunits. PurQ produces an ammonia molecule by converting glutamine to glutamate. PurL transfers the ammonia molecule to FGAR to form FGAM in an ATP-dependent manner. PurS interacts with PurQ and PurL and is thought to assist in the transfer of the ammonia molecule from PurQ to PurL. The chain is Phosphoribosylformylglycinamidine synthase subunit PurQ from Saccharolobus solfataricus (strain ATCC 35092 / DSM 1617 / JCM 11322 / P2) (Sulfolobus solfataricus).